The sequence spans 1682 residues: Calmodulin-binding transcription activator 1 (1682 aa).

Residues 63 to 188 constitute a DNA-binding region (CG-1); it reads KCSSLPKERH…YLNVPAIEDC (126 aa). A Nuclear localization signal motif is present at residues 112-119; it reads RKKVKYRK. Disordered stretches follow at residues 284–375 and 599–622; these read RIIS…MVDS and SSFSQTGHSPHIHQTPSPSFFLQD. Positions 302-327 are enriched in basic and acidic residues; the sequence is EVQHNDVSEGKHEPSHGRSTSREKRN. 2 stretches are compositionally biased toward polar residues: residues 337–367 and 599–618; these read HQNSTEVSSTNQVEVPDTTQSSPVSISSGLN and SSFSQTGHSPHIHQTPSPSF. The 79-residue stretch at 877–955 folds into the IPT/TIG domain; the sequence is DYSPEWSYPE…ISNSVVFEYK (79 aa). The tract at residues 992–1020 is disordered; that stretch reads MAEMTGSQQHKQASGGGGSGSGSGSGAGG. The span at 1005-1020 shows a compositional bias: gly residues; it reads SGGGGSGSGSGSGAGG. 3 ANK repeats span residues 1066–1095, 1111–1141, and 1145–1174; these read RGMTLLHLAAAQGYATLIQTLIKWRTKHAD, FSCTPLMWACALGHLEAAVVLYKWDRRAISI, and LGRLPLGIARSRGHVKLAECLEHLQRDEQA. Disordered regions lie at residues 1217–1249 and 1267–1318; these read ASTNPELRRPRSEPSNYYSTEGHKDYPAPKKHK and LSLE…SASQ. The span at 1268-1291 shows a compositional bias: polar residues; the sequence is SLEQPNIRKQSPRSKQPSPETISP. Over residues 1308–1318 the composition is skewed to low complexity; sequence ETAASQASASQ. IQ domains lie at 1549 to 1585, 1586 to 1608, and 1609 to 1631; these read QEVAAAVIQRCYRKYKQLTWIALKYALYKKMTQAAIL, IQSKFRSYYEQKRFQQSRRAAVL, and IQNFYRSYKKCGRRRPARRTAVI.

This sequence belongs to the CAMTA family. May interact with calmodulin.

It localises to the nucleus. It is found in the cytoplasm. Functionally, transcriptional activator. This chain is Calmodulin-binding transcription activator 1, found in Mus musculus (Mouse).